A 126-amino-acid polypeptide reads, in one-letter code: Probable 4-amino-4-deoxy-L-arabinose-phosphoundecaprenol flippase subunit ArnF (126 aa).

The helical transmembrane segment at 1–21 (MGFFWALLSVGLVSAAQLLLR) threads the bilayer. At 22–47 (SAMVALPPLTDIVAFLQHLLHFQPGT) the chain is on the periplasmic side. The chain crosses the membrane as a helical span at residues 48 to 68 (FGLFFGLLGYLLSMVCWYFAL). Over 69–76 (HRLPLSKA) the chain is Cytoplasmic. Residues 77-97 (YALLSLSYILVWAAAIWLPGW) form a helical membrane-spanning segment. Over 98–100 (HEP) the chain is Periplasmic. Residues 101-121 (FYWQSLLGVAIIVAGVLTIFW) form a helical membrane-spanning segment. The Cytoplasmic portion of the chain corresponds to 122 to 126 (PVKRR).

The protein belongs to the ArnF family. As to quaternary structure, heterodimer of ArnE and ArnF.

The protein resides in the cell inner membrane. It participates in bacterial outer membrane biogenesis; lipopolysaccharide biosynthesis. Its function is as follows. Translocates 4-amino-4-deoxy-L-arabinose-phosphoundecaprenol (alpha-L-Ara4N-phosphoundecaprenol) from the cytoplasmic to the periplasmic side of the inner membrane. The polypeptide is Probable 4-amino-4-deoxy-L-arabinose-phosphoundecaprenol flippase subunit ArnF (Klebsiella pneumoniae subsp. pneumoniae (strain ATCC 700721 / MGH 78578)).